Consider the following 96-residue polypeptide: Small ribosomal subunit protein bS16 (96 aa).

Belongs to the bacterial ribosomal protein bS16 family.

This chain is Small ribosomal subunit protein bS16, found in Vesicomyosocius okutanii subsp. Calyptogena okutanii (strain HA).